The sequence spans 136 residues: MKRYILATAIASLVAAPAMALAAGSNILSVHILDQQTGKPAPGVEVVLEQKKDNGWTQLNTGHTDQDGRIKALWPEKAAAPGDYRVIFKTGQYFESKKLDTFFPEIPVEFHISKTNEHYHVPLLLSQYGYSTYRGS.

Positions Met-1–Ala-20 are cleaved as a signal peptide. The substrate site is built by His-31, Arg-69, and Tyr-133.

Belongs to the transthyretin family. 5-hydroxyisourate hydrolase subfamily. Homotetramer.

It localises to the periplasm. It catalyses the reaction 5-hydroxyisourate + H2O = 5-hydroxy-2-oxo-4-ureido-2,5-dihydro-1H-imidazole-5-carboxylate + H(+). Catalyzes the hydrolysis of 5-hydroxyisourate (HIU) to 2-oxo-4-hydroxy-4-carboxy-5-ureidoimidazoline (OHCU). The protein is 5-hydroxyisourate hydrolase (hiuH) of Salmonella typhi.